The sequence spans 131 residues: Sec-independent protein translocase protein TatB (131 aa).

Residues 2–22 form a helical membrane-spanning segment; sequence FANIGWGEMLVLVMVGLVVLG. The interval 90–131 is disordered; it reads DSLFTGDFDRPTPKKPDAAGSAGPDATEQIGAGPIPFDSDAT. Over residues 96–106 the composition is skewed to basic and acidic residues; that stretch reads DFDRPTPKKPD.

It belongs to the TatB family. As to quaternary structure, the Tat system comprises two distinct complexes: a TatABC complex, containing multiple copies of TatA, TatB and TatC subunits, and a separate TatA complex, containing only TatA subunits. Substrates initially bind to the TatABC complex, which probably triggers association of the separate TatA complex to form the active translocon.

It is found in the cell membrane. In terms of biological role, part of the twin-arginine translocation (Tat) system that transports large folded proteins containing a characteristic twin-arginine motif in their signal peptide across membranes. Together with TatC, TatB is part of a receptor directly interacting with Tat signal peptides. TatB may form an oligomeric binding site that transiently accommodates folded Tat precursor proteins before their translocation. This is Sec-independent protein translocase protein TatB from Mycobacterium bovis (strain ATCC BAA-935 / AF2122/97).